A 139-amino-acid polypeptide reads, in one-letter code: Protein Turandot B (139 aa).

Residues 1–21 (MNFKTALICFALLLIGTLCSA) form the signal peptide.

The protein belongs to the Turandot family.

The protein localises to the secreted. Its function is as follows. A humoral factor that may play a role in stress tolerance. The polypeptide is Protein Turandot B (Drosophila sechellia (Fruit fly)).